A 435-amino-acid chain; its full sequence is NADH-quinone oxidoreductase subunit D (435 aa).

The protein belongs to the complex I 49 kDa subunit family. In terms of assembly, NDH-1 is composed of 14 different subunits. Subunits NuoB, C, D, E, F, and G constitute the peripheral sector of the complex.

It is found in the cell inner membrane. The enzyme catalyses a quinone + NADH + 5 H(+)(in) = a quinol + NAD(+) + 4 H(+)(out). Functionally, NDH-1 shuttles electrons from NADH, via FMN and iron-sulfur (Fe-S) centers, to quinones in the respiratory chain. The immediate electron acceptor for the enzyme in this species is believed to be ubiquinone. Couples the redox reaction to proton translocation (for every two electrons transferred, four hydrogen ions are translocated across the cytoplasmic membrane), and thus conserves the redox energy in a proton gradient. The chain is NADH-quinone oxidoreductase subunit D from Xylella fastidiosa (strain M12).